The following is a 972-amino-acid chain: Leucine--tRNA ligase (972 aa).

Positions 78 to 89 match the 'HIGH' region motif; sequence PYPSGDGLHVGH. The short motif at 741-745 is the 'KMSKS' region element; it reads KIGKS. Lys744 contributes to the ATP binding site.

Belongs to the class-I aminoacyl-tRNA synthetase family.

The protein localises to the cytoplasm. The enzyme catalyses tRNA(Leu) + L-leucine + ATP = L-leucyl-tRNA(Leu) + AMP + diphosphate. This Mycobacterium leprae (strain Br4923) protein is Leucine--tRNA ligase.